A 440-amino-acid chain; its full sequence is Glucoside xylosyltransferase 1 (440 aa).

Residues 1-6 (MRRYLR) are Cytoplasmic-facing. Residues 7 to 29 (VVVLCVACGFCSLLYAFSQLAVS) form a helical; Signal-anchor for type II membrane protein membrane-spanning segment. Over 30–440 (LEEGTGGGGG…DRYARSPKEK (411 aa)) the chain is Lumenal. N-linked (GlcNAc...) asparagine glycans are attached at residues asparagine 173, asparagine 237, and asparagine 278.

The protein belongs to the glycosyltransferase 8 family.

It is found in the membrane. It catalyses the reaction 3-O-(beta-D-glucosyl)-L-seryl-[EGF-like domain protein] + UDP-alpha-D-xylose = 3-O-[alpha-D-xylosyl-(1-&gt;3)-beta-D-glucosyl]-L-seryl-[EGF-like domain protein] + UDP + H(+). Glycosyltransferase which elongates the O-linked glucose attached to EGF-like repeats in the extracellular domain of Notch proteins by catalyzing the addition of xylose. The sequence is that of Glucoside xylosyltransferase 1 (GXYLT1) from Homo sapiens (Human).